The chain runs to 198 residues: uncharacterized protein (198 aa).

Residues 51–74 (EEPDNGDDRGSRRTTGQGRKWAAH) form a disordered region.

This is an uncharacterized protein from Homo sapiens (Human).